A 288-amino-acid chain; its full sequence is DegV domain-containing protein (288 aa).

Residues 3-282 (IAVMTDSTSY…SGGLGLGYVG (280 aa)) enclose the DegV domain. Positions 62 and 95 each coordinate hexadecanoate.

Functionally, may bind long-chain fatty acids, such as palmitate, and may play a role in lipid transport or fatty acid metabolism. The sequence is that of DegV domain-containing protein from Staphylococcus aureus.